The following is a 269-amino-acid chain: Enoyl-[acyl-carrier-protein] reductase [NADH] (269 aa).

Residues 20–21, 64–65, and 95–96 contribute to the NAD(+) site; these read SI, DV, and IG. Residue tyrosine 158 participates in substrate binding. Lysine 165 and isoleucine 194 together coordinate NAD(+).

Belongs to the short-chain dehydrogenases/reductases (SDR) family. FabI subfamily. In terms of assembly, homodimer. Homotetramer.

It carries out the reaction a 2,3-saturated acyl-[ACP] + NAD(+) = a (2E)-enoyl-[ACP] + NADH + H(+). The enzyme catalyses a 2,3-saturated acyl-CoA + NAD(+) = a (2E)-enoyl-CoA + NADH + H(+). It functions in the pathway lipid metabolism; mycolic acid biosynthesis. Its function is as follows. Enoyl-ACP reductase of the type II fatty acid syntase (FAS-II) system, which is involved in the biosynthesis of mycolic acids, a major component of mycobacterial cell walls. Catalyzes the NADH-dependent reduction of the double bond of 2-trans-enoyl-[acyl-carrier protein], an essential step in the fatty acid elongation cycle of the FAS-II pathway. Shows preference for long-chain fatty acyl thioester substrates, and can also use 2-trans-enoyl-CoAs as alternative substrates. The mycobacterial FAS-II system utilizes the products of the FAS-I system as primers to extend fatty acyl chain lengths up to C56, forming the meromycolate chain that serves as the precursor for final mycolic acids. In terms of biological role, is the primary target of the first-line antitubercular drug isoniazid (INH) and of the second-line drug ethionamide (ETH). Overexpressed inhA confers INH and ETH resistance to M.bovis. The mechanism of isoniazid action against InhA is covalent attachment of the activated form of the drug to the nicotinamide ring of NAD and binding of the INH-NAD adduct to the active site of InhA. Similarly, the ETH-NAD adduct binds InhA. The chain is Enoyl-[acyl-carrier-protein] reductase [NADH] from Mycobacterium bovis (strain ATCC BAA-935 / AF2122/97).